The chain runs to 342 residues: Small ribosomal subunit protein uS2 (342 aa).

The tract at residues 235–283 (EENAPFEQDEPRKPSQKPKQNRPENKPRFDKQAPRAAAKPEVKAEVKPE) is disordered. Positions 255 to 283 (NRPENKPRFDKQAPRAAAKPEVKAEVKPE) are enriched in basic and acidic residues.

Belongs to the universal ribosomal protein uS2 family.

The polypeptide is Small ribosomal subunit protein uS2 (Acholeplasma laidlawii (strain PG-8A)).